The chain runs to 231 residues: 2-C-methyl-D-erythritol 4-phosphate cytidylyltransferase (231 aa).

The protein belongs to the IspD/TarI cytidylyltransferase family. IspD subfamily.

It catalyses the reaction 2-C-methyl-D-erythritol 4-phosphate + CTP + H(+) = 4-CDP-2-C-methyl-D-erythritol + diphosphate. Its pathway is isoprenoid biosynthesis; isopentenyl diphosphate biosynthesis via DXP pathway; isopentenyl diphosphate from 1-deoxy-D-xylulose 5-phosphate: step 2/6. Catalyzes the formation of 4-diphosphocytidyl-2-C-methyl-D-erythritol from CTP and 2-C-methyl-D-erythritol 4-phosphate (MEP). The polypeptide is 2-C-methyl-D-erythritol 4-phosphate cytidylyltransferase (Mycobacterium bovis (strain BCG / Pasteur 1173P2)).